A 157-amino-acid polypeptide reads, in one-letter code: SsrA-binding protein (157 aa).

Positions 133-157 are disordered; it reads LHDKRETEKKRDWSREKSRLLRARG. Over residues 135 to 151 the composition is skewed to basic and acidic residues; sequence DKRETEKKRDWSREKSR.

It belongs to the SmpB family.

Its subcellular location is the cytoplasm. Required for rescue of stalled ribosomes mediated by trans-translation. Binds to transfer-messenger RNA (tmRNA), required for stable association of tmRNA with ribosomes. tmRNA and SmpB together mimic tRNA shape, replacing the anticodon stem-loop with SmpB. tmRNA is encoded by the ssrA gene; the 2 termini fold to resemble tRNA(Ala) and it encodes a 'tag peptide', a short internal open reading frame. During trans-translation Ala-aminoacylated tmRNA acts like a tRNA, entering the A-site of stalled ribosomes, displacing the stalled mRNA. The ribosome then switches to translate the ORF on the tmRNA; the nascent peptide is terminated with the 'tag peptide' encoded by the tmRNA and targeted for degradation. The ribosome is freed to recommence translation, which seems to be the essential function of trans-translation. The protein is SsrA-binding protein of Afipia carboxidovorans (strain ATCC 49405 / DSM 1227 / KCTC 32145 / OM5) (Oligotropha carboxidovorans).